The sequence spans 439 residues: tRNA modification GTPase MnmE (439 aa).

(6S)-5-formyl-5,6,7,8-tetrahydrofolate is bound by residues Arg-23, Glu-80, and Lys-120. A TrmE-type G domain is found at 217 to 365 (GLKIVIAGEP…LLTALQSHLP (149 aa)). Asn-227 contributes to the K(+) binding site. GTP is bound by residues 227 to 232 (NAGKSS), 246 to 252 (TEVAGTT), and 271 to 274 (DTAG). Residue Ser-231 participates in Mg(2+) binding. K(+) is bound by residues Thr-246, Val-248, and Thr-251. Residue Thr-252 coordinates Mg(2+). Lys-439 contributes to the (6S)-5-formyl-5,6,7,8-tetrahydrofolate binding site.

Belongs to the TRAFAC class TrmE-Era-EngA-EngB-Septin-like GTPase superfamily. TrmE GTPase family. As to quaternary structure, homodimer. Heterotetramer of two MnmE and two MnmG subunits. The cofactor is K(+).

The protein resides in the cytoplasm. Functionally, exhibits a very high intrinsic GTPase hydrolysis rate. Involved in the addition of a carboxymethylaminomethyl (cmnm) group at the wobble position (U34) of certain tRNAs, forming tRNA-cmnm(5)s(2)U34. This Rhizobium meliloti (strain 1021) (Ensifer meliloti) protein is tRNA modification GTPase MnmE.